A 208-amino-acid polypeptide reads, in one-letter code: Pyrrolidone-carboxylate peptidase (208 aa).

Residues Glu-79, Cys-142, and His-166 contribute to the active site.

Belongs to the peptidase C15 family. In terms of assembly, homotetramer made of two disulfide-linked dimers.

The protein resides in the cytoplasm. The enzyme catalyses Release of an N-terminal pyroglutamyl group from a polypeptide, the second amino acid generally not being Pro.. Its function is as follows. Removes 5-oxoproline from various penultimate amino acid residues except L-proline. In Pyrococcus furiosus (strain ATCC 43587 / DSM 3638 / JCM 8422 / Vc1), this protein is Pyrrolidone-carboxylate peptidase (pcp).